The following is a 483-amino-acid chain: Phloretin 2'-O-glucosyltransferase (483 aa).

Catalysis depends on H15, which acts as the Proton acceptor. H15 contributes to the an anthocyanidin binding site. D118 functions as the Charge relay in the catalytic mechanism. UDP-alpha-D-glucose contacts are provided by T140, A360, Q362, H377, W380, N381, S382, and E385. An an anthocyanidin-binding site is contributed by A400. E401 and Q402 together coordinate UDP-alpha-D-glucose.

The protein belongs to the UDP-glycosyltransferase family. As to expression, highly expressed in roots and at lower levels in leaves, flowers and fruits.

It catalyses the reaction phloretin + UDP-alpha-D-glucose = phlorizin + UDP + H(+). Functionally, glycosyltransferase that possesses phloretin 2'-O-glycosyltransferase activity. Converts phloretin to phlorizin (phloretin 2'-O-glucoside), a potent antioxidant. Is specific for phloretin and does not possess glycosyltransferase activity toward caffeic acid, catechin, chlorogenic acid, 2-coumaric acid, 3-coumaric acid, 4-coumaric acid, cyanidin, 3,4-dihydroxyhydrocinnamic acid, epicatechin, 3-hydroxybenzoic acid, naringenin, 3,4-dihydroxybenzoic acid, quercetin and rutin. Can glycosylate phloretin in the presence of UDP-glucose, UDP-xylose and UDP-galactose. This chain is Phloretin 2'-O-glucosyltransferase, found in Malus domestica (Apple).